A 299-amino-acid polypeptide reads, in one-letter code: Protein sprouty homolog 4 (299 aa).

Methionine 1 is subject to N-acetylmethionine. Disordered stretches follow at residues 55-79 and 92-126; these read NPSL…PTPA and FSGR…QASP. The segment covering 92 to 107 has biased composition (low complexity); it reads FSGRPSSVSSSSSTSS. Serine 125 carries the phosphoserine modification. The 108-residue stretch at 166–273 folds into the SPR domain; sequence KCKECASPRT…GYDRLRRPGC (108 aa). Positions 181-299 are required for interaction with TESK1. Required for colocalization with TESK1 at vesicular spots in the cytoplasm and inhibition of TESK1 kinase activity, resulting in inhibition of cell spreading; the sequence is VCNQECLCSA…AKTSRPDKPF (119 aa).

Belongs to the sprouty family. As to quaternary structure, interacts (via C-terminus) with TESK1 (via both C- and N-termini); the interaction inhibits TESK1 kinase activity. Interacts with RAF1. Interacts with CAV1 (via C-terminus).

Its subcellular location is the cytoplasm. The protein localises to the cell projection. It localises to the ruffle membrane. Functionally, suppresses the insulin receptor and EGFR-transduced MAPK signaling pathway, but does not inhibit MAPK activation by a constitutively active mutant Ras. Probably impairs the formation of GTP-Ras. Inhibits Ras-independent, but not Ras-dependent, activation of RAF1. Represses integrin-mediated cell spreading via inhibition of TESK1-mediated phosphorylation of cofilin. This Homo sapiens (Human) protein is Protein sprouty homolog 4 (SPRY4).